The following is a 280-amino-acid chain: Urease accessory protein UreD 1 (280 aa).

The protein belongs to the UreD family. UreD, UreF and UreG form a complex that acts as a GTP-hydrolysis-dependent molecular chaperone, activating the urease apoprotein by helping to assemble the nickel containing metallocenter of UreC. The UreE protein probably delivers the nickel.

It localises to the cytoplasm. Its function is as follows. Required for maturation of urease via the functional incorporation of the urease nickel metallocenter. This is Urease accessory protein UreD 1 from Bradyrhizobium sp. (strain BTAi1 / ATCC BAA-1182).